Reading from the N-terminus, the 105-residue chain is uncharacterized protein (105 aa).

This is an uncharacterized protein from Saccharomyces cerevisiae (strain ATCC 204508 / S288c) (Baker's yeast).